Reading from the N-terminus, the 447-residue chain is Nacrein (447 aa).

A signal peptide spans 1–17 (MYLHLTALCVVIPLCYG). Asn44 is a glycosylation site (N-linked (GlcNAc...) asparagine). Residues 50–446 (AGFSYDRSIC…KNKVTVYKSF (397 aa)) enclose the Alpha-carbonic anhydrase domain. His149, His151, and His174 together coordinate Zn(2+). The interval 218-329 (DEPDDEECKH…GENGHKHGCR (112 aa)) is disordered. Over residues 224–236 (ECKHILKGHHPDN) the composition is skewed to basic and acidic residues. The segment covering 237 to 321 (NENGNGDNGN…NNGENGNNGE (85 aa)) has biased composition (low complexity). 27 repeat units span residues 242-244 (GDN), 245-247 (GNN), 248-250 (GYN), 251-253 (GDN), 254-256 (GNN), 257-259 (GDN), 260-262 (GNN), 263-265 (SYN), 266-268 (GDN), 269-271 (GNN), 272-274 (GVN), 275-277 (GNN), 278-280 (GYN), 281-283 (GDN), 284-286 (GNN), 287-289 (GDN), 290-292 (GNN), 293-295 (GYN), 296-298 (GDN), 299-301 (GNN), 302-304 (GDN), 305-307 (GNN), 308-310 (GEN), 311-313 (GNN), 314-316 (GEN), 317-318 (GN), and 320-322 (GEN). The tract at residues 242 to 322 (GDNGNNGYNG…NGENGNNGEN (81 aa)) is 27 X 3 AA approximate tandem repeats of G-X-N. An N-linked (GlcNAc...) asparagine glycan is attached at Asn261. 387-388 (TT) is a binding site for substrate.

The protein belongs to the alpha-carbonic anhydrase family. In terms of assembly, homooligomer; disulfide-linked. May also be disulfide-linked to insoluble organic matrix. Zn(2+) serves as cofactor. In terms of processing, N-glycosylated. Expressed at whole regions of the mantle epithelium tissue. Is found in the aragonitic nacreous and calcitic prismatic and foliated layers.

The protein localises to the secreted. The protein resides in the extracellular space. It is found in the extracellular matrix. It catalyses the reaction hydrogencarbonate + H(+) = CO2 + H2O. Acts as a negative regulator for calcification in the shells of mollusks. May function both as a calcium concentrator and as a carbonic anhydrase required for production of carbonate ions, which are assembled to CaCO(3) at mineralization sites. Is important for shell formation in both the calcitic prismatic layer and the aragonitic nacreous layer. This Pinctada fucata (Akoya pearl oyster) protein is Nacrein.